A 308-amino-acid polypeptide reads, in one-letter code: Probable pyridoxal 5'-phosphate synthase subunit pdx-1 (308 aa).

Aspartate 30 serves as a coordination point for D-ribose 5-phosphate. The active-site Schiff-base intermediate with D-ribose 5-phosphate is the lysine 87. Glycine 159 contacts D-ribose 5-phosphate. Arginine 171 serves as a coordination point for D-glyceraldehyde 3-phosphate. D-ribose 5-phosphate is bound by residues glycine 224 and glycine 245 to serine 246.

It belongs to the PdxS/SNZ family.

The enzyme catalyses aldehydo-D-ribose 5-phosphate + D-glyceraldehyde 3-phosphate + L-glutamine = pyridoxal 5'-phosphate + L-glutamate + phosphate + 3 H2O + H(+). Its pathway is cofactor biosynthesis; pyridoxal 5'-phosphate biosynthesis. Catalyzes the formation of pyridoxal 5'-phosphate from ribose 5-phosphate (RBP), glyceraldehyde 3-phosphate (G3P) and ammonia. The ammonia is provided by pdx-2. Can also use ribulose 5-phosphate and dihydroxyacetone phosphate as substrates, resulting from enzyme-catalyzed isomerization of RBP and G3P, respectively. Also plays an indirect role in resistance to singlet oxygen-generating photosensitizers. The sequence is that of Probable pyridoxal 5'-phosphate synthase subunit pdx-1 (pdx-1) from Neurospora crassa (strain ATCC 24698 / 74-OR23-1A / CBS 708.71 / DSM 1257 / FGSC 987).